Consider the following 430-residue polypeptide: Potassium channel subfamily K member 12 (430 aa).

At 1–38 the chain is on the cytoplasmic side; sequence MSSRSPRPPPRRCRRRLPRPSCCCCCCRRSHLNEDTGR. Residues 11 to 16 form an ER retention/retrieval signal region; sequence RRCRRR. A helical membrane pass occupies residues 39 to 59; the sequence is FVLLAALIGLYLVAGATVFSA. N-linked (GlcNAc...) asparagine glycosylation occurs at asparagine 78. The segment at residues 114–134 is an intramembrane region (pore-forming); it reads WDFPGAFYFVGTVVSTIGFGM. Positions 129, 130, and 131 each coordinate K(+). Residues 129-134 form a selectivity filter 1 region; it reads TIGFGM. The chain crosses the membrane as a helical span at residues 145-165; it reads FLIAYGLFGCAGTILFFNLFL. The Cytoplasmic segment spans residues 166–212; sequence ERIISLLAFIMRACRERQLRRSGLLPATFRRGSALSEADSLAGWKPS. A helical transmembrane segment spans residues 213–233; that stretch reads VYHVLLILGLFAVLLACCASA. The segment at residues 243–263 is an intramembrane region (pore-forming); that stretch reads YVDSLYFCFVTFSTIGFGDLV. K(+) is bound by residues threonine 256, isoleucine 257, glycine 258, and phenylalanine 259. The selectivity filter 2 stretch occupies residues 256–261; that stretch reads TIGFGD. A helical transmembrane segment spans residues 282 to 302; it reads LFILLGVCCIYSLFNVISILI. At 303-430 the chain is on the cytoplasmic side; it reads KQVLNWMLRK…NRLAETSASR (128 aa).

This sequence belongs to the two pore domain potassium channel (TC 1.A.1.8) family. As to quaternary structure, homodimer. Heterodimer with KCNK13. In terms of tissue distribution, highly expressed in most brain regions. Also expressed in other tissues such as lung, kidney, liver, stomach and spleen.

It is found in the cell membrane. Its subcellular location is the endoplasmic reticulum membrane. The enzyme catalyses K(+)(in) = K(+)(out). In terms of biological role, k(+) channel subunit that may homo- and heterodimerize to form functional channels with distinct regulatory and gating properties. Can heterodimerize with KCNK13 subunit to conduct K(+) outward rectifying currents at the plasma membrane. The homodimers are mainly retained in the endoplasmic reticulum compartment and may be targeted to the cell surface upon phosphorylation or other activation signals yet to be elucidated. The sequence is that of Potassium channel subfamily K member 12 (Kcnk12) from Rattus norvegicus (Rat).